We begin with the raw amino-acid sequence, 468 residues long: Dimethylamine methyltransferase MtbB1 (468 aa).

Residue O356 is a non-standard amino acid, pyrrolysine.

The protein belongs to the dimethylamine methyltransferase family.

It carries out the reaction Co(I)-[dimethylamine-specific corrinoid protein] + dimethylamine + H(+) = methyl-Co(III)-[dimethylamine-specific corrinoid protein] + methylamine. Its pathway is one-carbon metabolism; methanogenesis from dimethylamine. Functionally, catalyzes the transfer of a methyl group from dimethylamine to the corrinoid cofactor of MtbC. This is Dimethylamine methyltransferase MtbB1 (mtbB1) from Methanosarcina mazei (strain ATCC BAA-159 / DSM 3647 / Goe1 / Go1 / JCM 11833 / OCM 88) (Methanosarcina frisia).